The chain runs to 666 residues: Mitogen-activated protein kinase kinase kinase ANP1 (666 aa).

The region spanning 69–331 (WRKGQLIGRG…ASELLKHPFV (263 aa)) is the Protein kinase domain. Residues 75 to 83 (IGRGAFGTV) and K98 contribute to the ATP site. The stretch at 101–131 (LIAANFASKEKTQAHIQELEEEVKLLKNLSH) forms a coiled coil. Residues K109 and K111 each participate in a glycyl lysine isopeptide (Lys-Gly) (interchain with G-Cter in ubiquitin) cross-link. D197 (proton acceptor) is an active-site residue. Basic and acidic residues predominate over residues 452 to 464 (KFDESPGNGEKES). 3 disordered regions span residues 452 to 481 (KFDE…DDDE), 536 to 592 (GFLK…DGVS), and 635 to 666 (QEIM…SPGK). Positions 538 to 558 (LKLPPKSRSPSRGPLGGSPSR) are enriched in low complexity. The span at 560–569 (TDATSCSKSP) shows a compositional bias: polar residues. Residues 620–643 (KKWKEELDQELERKRQEIMRQAGL) adopt a coiled-coil conformation. The segment covering 647 to 660 (PRDRGMSRQREKSR) has biased composition (basic and acidic residues).

Belongs to the protein kinase superfamily. STE Ser/Thr protein kinase family. MAP kinase kinase kinase subfamily. In terms of tissue distribution, expressed in roots, inflorescence stems, flower buds and flowers. Low amount in rosette and cauline leaves.

It catalyses the reaction L-seryl-[protein] + ATP = O-phospho-L-seryl-[protein] + ADP + H(+). It carries out the reaction L-threonyl-[protein] + ATP = O-phospho-L-threonyl-[protein] + ADP + H(+). Functionally, may be involved in an oxidative stress-mediated signaling cascade that phosphorylates downstream MAP kinases MPK3 and MPK6. May suppress auxin signaling that promotes cell cycle. Functionally redundant to ANP2 and ANP3 in the positive regulation of cytokinesis. The chain is Mitogen-activated protein kinase kinase kinase ANP1 (ANP1) from Arabidopsis thaliana (Mouse-ear cress).